The chain runs to 100 residues: NADH-quinone oxidoreductase subunit K (100 aa).

3 consecutive transmembrane segments (helical) span residues 4–24, 28–48, and 61–81; these read FEYY…GVII, IIAM…AFVA, and FVFF…GLII.

Belongs to the complex I subunit 4L family. In terms of assembly, NDH-1 is composed of 14 different subunits. Subunits NuoA, H, J, K, L, M, N constitute the membrane sector of the complex.

It is found in the cell inner membrane. It carries out the reaction a quinone + NADH + 5 H(+)(in) = a quinol + NAD(+) + 4 H(+)(out). NDH-1 shuttles electrons from NADH, via FMN and iron-sulfur (Fe-S) centers, to quinones in the respiratory chain. The immediate electron acceptor for the enzyme in this species is believed to be ubiquinone. Couples the redox reaction to proton translocation (for every two electrons transferred, four hydrogen ions are translocated across the cytoplasmic membrane), and thus conserves the redox energy in a proton gradient. The sequence is that of NADH-quinone oxidoreductase subunit K from Sulfurihydrogenibium sp. (strain YO3AOP1).